Consider the following 836-residue polypeptide: Exonuclease 1 (836 aa).

The tract at residues 1-99 (MGIQGLLPQL…TKRERSRKEN (99 aa)) is N-domain. Residues Asp-30 and Asp-78 each contribute to the Mg(2+) site. Positions 82–108 (LPMKGDQETKRERSRKENLERAKEHES) are disordered. Basic and acidic residues predominate over residues 84–108 (MKGDQETKRERSRKENLERAKEHES). Residues 138–230 (KQEKVDYIVA…ILSGCDYLPS (93 aa)) form an I-domain region. The Mg(2+) site is built by Glu-150, Asp-152, Asp-171, Asp-173, and Asp-226. Disordered regions lie at residues 464–488 (RDDS…DPDI), 568–641 (EDEC…TNSE), and 744–836 (TASA…TSRS). Over residues 568 to 577 (EDECHDEDNC) the composition is skewed to acidic residues. Composition is skewed to polar residues over residues 578-592 (ETGN…QRSS) and 744-758 (TASA…TSKA).

The protein belongs to the XPG/RAD2 endonuclease family. EXO1 subfamily. Requires Mg(2+) as cofactor.

It localises to the nucleus. Functionally, putative 5'-&gt;3' double-stranded DNA exonuclease which may also contain a cryptic 3'-&gt;5' double-stranded DNA exonuclease activity. May be involved in DNA mismatch repair (MMR). In Oryza sativa subsp. japonica (Rice), this protein is Exonuclease 1 (EXO1).